Reading from the N-terminus, the 494-residue chain is UPF0371 protein stu1377 (494 aa).

It belongs to the UPF0371 family.

This Streptococcus thermophilus (strain ATCC BAA-250 / LMG 18311) protein is UPF0371 protein stu1377.